The following is a 338-amino-acid chain: Glyceraldehyde-3-phosphate dehydrogenase (338 aa).

NAD(+) is bound by residues 13 to 14 (RI), Asp35, and Arg80. D-glyceraldehyde 3-phosphate is bound by residues 151 to 153 (SCT), Thr182, 211 to 212 (TG), and Arg234. Residue Cys152 is the Nucleophile of the active site. Residue Asn317 coordinates NAD(+).

It belongs to the glyceraldehyde-3-phosphate dehydrogenase family. In terms of assembly, homotetramer.

The protein resides in the cytoplasm. It catalyses the reaction D-glyceraldehyde 3-phosphate + phosphate + NAD(+) = (2R)-3-phospho-glyceroyl phosphate + NADH + H(+). It participates in carbohydrate degradation; glycolysis; pyruvate from D-glyceraldehyde 3-phosphate: step 1/5. The polypeptide is Glyceraldehyde-3-phosphate dehydrogenase (gpdA) (Aspergillus oryzae (strain ATCC 42149 / RIB 40) (Yellow koji mold)).